The following is a 648-amino-acid chain: Rho GTPase-activating protein 25 (648 aa).

One can recognise a PH domain in the interval 46–151 (RPIKVGWLKK…WVKFLRRVAG (106 aa)). The Rho-GAP domain maps to 160-354 (QRLDETVAYE…MMIRDHEVLF (195 aa)). Residues 356–559 (KSKDAPISPP…DLDSLQRTVQ (204 aa)) form a disordered region. Phosphoserine is present on residues S363, S396, and S403. The segment covering 393 to 410 (RTDSFSNTASSPDATSPT) has biased composition (polar residues). T407 carries the phosphothreonine modification. The span at 417 to 431 (QHQEDSGKAPRENPG) shows a compositional bias: basic and acidic residues. Polar residues-rich tracts occupy residues 453–462 (SAFQGTTSSK) and 497–515 (DQRTSTYDNVPTSPQSQGN). S537 carries the phosphoserine modification. A coiled-coil region spans residues 540-641 (EAGSKNSGED…VKEFVKSMEK (102 aa)).

In terms of biological role, GTPase activator for the Rho-type GTPases by converting them to an inactive GDP-bound state. In Mus musculus (Mouse), this protein is Rho GTPase-activating protein 25 (Arhgap25).